The sequence spans 88 residues: MPNIKSAIKRTKTNNERRVHNATIKSAMRTAIKQVEASVANNEADKAKTALTEAAKRIDKAVKTGLVHKNTAARYKSRLAKKVNGLSA.

Belongs to the bacterial ribosomal protein bS20 family. In terms of assembly, part of the 30S ribosomal subunit.

Its function is as follows. Binds directly to 16S ribosomal RNA. In Bacillus subtilis (strain 168), this protein is Small ribosomal subunit protein bS20 (rpsT).